An 886-amino-acid chain; its full sequence is MAKTKDKSIFVSSVDSDSDIEEIIMPPKPPVEVIQLDDSDDECQDICKPIYNKKVHKDPIVRVSYRQRIPESYFPGISTSLINVQREHNNRSKYDTWGSNSCSEPRISISNIERLEKPSYHEARRVPVFERLERSREISNGRNNQNPIRFNHKFVPPINRQTPLFNNQQLLVNVPFNEHHPTFLEPRPFYRSNVNEYNAGGLNRGSFRKMGRLNMEIVRDNDDFEEHFLAPNFPAKSASIDRRVDDSLSSNSYLRSGMIMASSERLEDPRFSGRLPVFARQINNQEINNDNFYQNSICYNHNNYPSNLESRVSFPFEARHHDADGLNRGRYQVMEHVNMGIMRNSEDFEDYDITQTDQDNHFYNDKDSGKHHRHRHRSKNNKKHKKHYDRNESGNSSECREEDDYEISNPSEKRHERKKRQRSSHRKESACVDEDNYILDEDRFYQQESDEYHNSLEMEREYEHGMDVGVKKEHSYKCDDIARNARKRARLTDDDMARREELFKEWSYSKEIVDGVTQLFGGPPRESERHQKKQKELVFEADRTAMHALSIRSGALVKARLLEIHYATGCHLIFLEEVKRGGYTYVELKGDPEHIKNAQKMIDDMVIDEHYIHDGRESIVYFYNAPHELRNTRGFDLNCRSIEKYCGIIIEKMREVFGIGGYVSTAPLKLTGSVNSIHMARETMQSKTKRFLDEEKFKETVEHCTPISFYRKIIGRCGENLKTIEKVTRTAIVFKRSFDNNEACFSIRGRTDNIKQAIEKIEEITHENQPADDDPGIFQVRVPENMVARLIGRHGVEINRIRSESKAKCYLNAIRGNLDDKFMVCSGGVEEAAYAAYLTKVKIGIIDPKVIQFNSDDFNNLSKVKPMEDPRLVMLKKRYAERKECK.

The segment covering 359–368 has biased composition (basic and acidic residues); sequence DNHFYNDKDS. The segment at 359–433 is disordered; it reads DNHFYNDKDS…SHRKESACVD (75 aa). Composition is skewed to basic residues over residues 369–388 and 415–425; these read GKHH…KKHY and HERKKRQRSSH. 2 consecutive KH domains span residues 698-761 and 775-839; these read KETV…IEKI and PGIF…AYLT.

This Caenorhabditis elegans protein is KH domain-containing protein hrpk-2.